The following is an 856-amino-acid chain: DNA mismatch repair protein MutS (856 aa).

605–612 is an ATP binding site; sequence GPNMSGKS.

Belongs to the DNA mismatch repair MutS family.

This protein is involved in the repair of mismatches in DNA. It is possible that it carries out the mismatch recognition step. This protein has a weak ATPase activity. The protein is DNA mismatch repair protein MutS of Lysinibacillus sphaericus (strain C3-41).